The primary structure comprises 243 residues: Derlin-1.1 (243 aa).

Topologically, residues 1 to 20 (MSSPAEYYKSLPPISKAYGT) are cytoplasmic. Residues 21-41 (LCFFTTVLVQLQILHPLFLYL) form a helical membrane-spanning segment. The Lumenal segment spans residues 42 to 55 (DYPLVFKKFEIWRL). Residues 56–76 (LTSFFFLAPFSMKFGIRLLMI) form a helical membrane-spanning segment. At 77 to 94 (ARYGVMLEKGAFDKRTAD) the chain is on the cytoplasmic side. Residues 95-115 (FLWMMIFGAISLLVLSIIPLF) traverse the membrane as a helical segment. Topologically, residues 116–157 (NSFFLGIPMVSMLLYVWSRENPNAQINIYGLVQLRSFYLPWA) are lumenal. A helical transmembrane segment spans residues 158–178 (MLLLDVIFGSSLMPGLLGIMV). Residues 179–243 (GHLYYFFAVL…FRGRSYRLNQ (65 aa)) are Cytoplasmic-facing. The disordered stretch occupies residues 219 to 243 (SPVRPPANGNSGSGVFRGRSYRLNQ).

Belongs to the derlin family. As to expression, expressed in roots, stalks, leaves, immature ears, embryo and endosperm.

The protein localises to the endoplasmic reticulum membrane. In terms of biological role, may be involved in the degradation process of specific misfolded endoplasmic reticulum (ER) luminal proteins. This chain is Derlin-1.1 (DER1.1), found in Zea mays (Maize).